A 330-amino-acid polypeptide reads, in one-letter code: NADH-quinone oxidoreductase subunit H (330 aa).

The next 8 helical transmembrane spans lie at 5 to 25, 78 to 98, 120 to 140, 155 to 175, 191 to 211, 243 to 263, 271 to 291, and 308 to 328; these read LLTL…VLTL, WVFM…FAVI, IGLL…ALGG, AMAQ…PVVM, SLPN…AIMA, FFVG…VLFL, LPGI…FIWV, and WKIL…WLIW.

Belongs to the complex I subunit 1 family. In terms of assembly, NDH-1 is composed of 14 different subunits. Subunits NuoA, H, J, K, L, M, N constitute the membrane sector of the complex.

The protein localises to the cell inner membrane. It catalyses the reaction a quinone + NADH + 5 H(+)(in) = a quinol + NAD(+) + 4 H(+)(out). In terms of biological role, NDH-1 shuttles electrons from NADH, via FMN and iron-sulfur (Fe-S) centers, to quinones in the respiratory chain. The immediate electron acceptor for the enzyme in this species is believed to be ubiquinone. Couples the redox reaction to proton translocation (for every two electrons transferred, four hydrogen ions are translocated across the cytoplasmic membrane), and thus conserves the redox energy in a proton gradient. This subunit may bind ubiquinone. The chain is NADH-quinone oxidoreductase subunit H from Syntrophotalea carbinolica (strain DSM 2380 / NBRC 103641 / GraBd1) (Pelobacter carbinolicus).